We begin with the raw amino-acid sequence, 278 residues long: 4-deoxy-L-threo-5-hexosulose-uronate ketol-isomerase (278 aa).

Residues H196, H198, E203, and H245 each contribute to the Zn(2+) site.

Belongs to the KduI family. Requires Zn(2+) as cofactor.

It catalyses the reaction 5-dehydro-4-deoxy-D-glucuronate = 3-deoxy-D-glycero-2,5-hexodiulosonate. It functions in the pathway glycan metabolism; pectin degradation; 2-dehydro-3-deoxy-D-gluconate from pectin: step 4/5. In terms of biological role, catalyzes the isomerization of 5-dehydro-4-deoxy-D-glucuronate to 3-deoxy-D-glycero-2,5-hexodiulosonate. The protein is 4-deoxy-L-threo-5-hexosulose-uronate ketol-isomerase of Salmonella typhimurium (strain LT2 / SGSC1412 / ATCC 700720).